Consider the following 322-residue polypeptide: 4-diphosphocytidyl-2-C-methyl-D-erythritol kinase (322 aa).

The active site involves Lys-18. 130-140 (PMGAGLGGGSS) lines the ATP pocket. Residue Asp-172 is part of the active site.

Belongs to the GHMP kinase family. IspE subfamily.

It catalyses the reaction 4-CDP-2-C-methyl-D-erythritol + ATP = 4-CDP-2-C-methyl-D-erythritol 2-phosphate + ADP + H(+). It participates in isoprenoid biosynthesis; isopentenyl diphosphate biosynthesis via DXP pathway; isopentenyl diphosphate from 1-deoxy-D-xylulose 5-phosphate: step 3/6. Catalyzes the phosphorylation of the position 2 hydroxy group of 4-diphosphocytidyl-2C-methyl-D-erythritol. This chain is 4-diphosphocytidyl-2-C-methyl-D-erythritol kinase, found in Psychrobacter cryohalolentis (strain ATCC BAA-1226 / DSM 17306 / VKM B-2378 / K5).